The chain runs to 637 residues: Biosynthetic arginine decarboxylase (637 aa).

An N6-(pyridoxal phosphate)lysine modification is found at lysine 110. 290–300 (IDVGGGLGVDY) contacts substrate.

Belongs to the Orn/Lys/Arg decarboxylase class-II family. SpeA subfamily. The cofactor is Mg(2+). Pyridoxal 5'-phosphate serves as cofactor.

The enzyme catalyses L-arginine + H(+) = agmatine + CO2. Functionally, catalyzes the biosynthesis of agmatine from arginine. The chain is Biosynthetic arginine decarboxylase from Pseudomonas putida (strain ATCC 47054 / DSM 6125 / CFBP 8728 / NCIMB 11950 / KT2440).